The following is a 712-amino-acid chain: MNNVPSTSRENSRNPSESSSSIQDLLINVEANDLSSVVNEDVSITMSAPPSPATPRKIDFSAEIETPKSTGIRRRLTLKDSIGSDLENDPESTPAIRKPSRISYDERLTVICDSQTSSPLQTPSPSQERDSAPFADVFQPKGFFSFFWEELTRGYSLHNDHARFSEKRRKVYAFLRIPLELEQFLTYGLLQCIDAFFYLFTFLPLRFLMSIFGALLRIKRWTSAETCDFLKVVIIVAASMLIREIDSSFLYHQVRSQGVIKLYIFYNMLEVADRLFSSLGQDIFDALLWTANSEKRFSVGYFIRTCGHLIVAILYATLHSFLVILQATTLNVAFNSHNQTVLAIMMSNNFVELKGSVFKKFAKANLFQMACSDVRERFHIFALLFVVMIRNMTAVNWNIDSFTEMIPDIIMVVGCEYFVDWLKHAFITKFNEINAEVYKDFTITIAFDVIRSRDQSAFSDYSDQVSRRMGFIPIPLSIMIIRVLSQTFTLDNWGSCIIFGIGWLLVFAVKICNGVVMLGQACHHVKRFRDIQARAEFELFRKRMVEKKSKSAPNSPRMSLIDFTDVLHQPAAGKGFTVSDMLSQWEELQPSLLSSEIRRSTDRETAVSHLTARSDERTPRRAVSMAHIPRRDRSEPPPAPSMDQDPQLDTEDPVVTENNTNSNSEQASPVKKKTTAAPVTSSASTNTNATSSDELADVTAYKMPEQGVQRIE.

Low complexity predominate over residues 1 to 21; that stretch reads MNNVPSTSRENSRNPSESSSS. Disordered regions lie at residues 1–22 and 44–66; these read MNNVPSTSRENSRNPSESSSSI and ITMSAPPSPATPRKIDFSAEIET. 7 helical membrane passes run 196-216, 222-242, 305-325, 379-399, 402-422, 470-490, and 497-517; these read FFYLFTFLPLRFLMSIFGALL, TSAETCDFLKVVIIVAASMLI, TCGHLIVAILYATLHSFLVIL, HIFALLFVVMIRNMTAVNWNI, FTEMIPDIIMVVGCEYFVDWL, GFIPIPLSIMIIRVLSQTFTL, and IIFGIGWLLVFAVKICNGVVM. Basic and acidic residues predominate over residues 596-619; sequence EIRRSTDRETAVSHLTARSDERTP. Positions 596 to 712 are disordered; the sequence is EIRRSTDRET…MPEQGVQRIE (117 aa). A compositionally biased stretch (polar residues) spans 656 to 667; the sequence is TENNTNSNSEQA. The segment covering 675–692 has biased composition (low complexity); that stretch reads TAAPVTSSASTNTNATSS.

Belongs to the TAPT1 family.

It localises to the membrane. The sequence is that of Protein TAPT1 homolog from Caenorhabditis elegans.